Consider the following 478-residue polypeptide: ATP synthase subunit beta (478 aa).

164–171 (GGAGVGKT) is a binding site for ATP.

The protein belongs to the ATPase alpha/beta chains family. F-type ATPases have 2 components, CF(1) - the catalytic core - and CF(0) - the membrane proton channel. CF(1) has five subunits: alpha(3), beta(3), gamma(1), delta(1), epsilon(1). CF(0) has three main subunits: a(1), b(2) and c(9-12). The alpha and beta chains form an alternating ring which encloses part of the gamma chain. CF(1) is attached to CF(0) by a central stalk formed by the gamma and epsilon chains, while a peripheral stalk is formed by the delta and b chains.

The protein resides in the cell membrane. The catalysed reaction is ATP + H2O + 4 H(+)(in) = ADP + phosphate + 5 H(+)(out). In terms of biological role, produces ATP from ADP in the presence of a proton gradient across the membrane. The catalytic sites are hosted primarily by the beta subunits. The protein is ATP synthase subunit beta of Streptomyces coelicolor (strain ATCC BAA-471 / A3(2) / M145).